A 375-amino-acid polypeptide reads, in one-letter code: Filamin-binding LIM protein 1 (375 aa).

Positions 1–70 (MASKPEKRVA…SPWTPPGRAA (70 aa)) are filamin-binding. 2 disordered regions span residues 43–119 (WEAP…PSEE) and 137–176 (HLSPPLPPPPPQAPAERPSVQPSPLRPMEEELPPPPAERV). Pro residues-rich tracts occupy residues 104–114 (FPPPPPPPPVL) and 140–149 (PPLPPPPPQA). A compositionally biased stretch (low complexity) spans 150–159 (PAERPSVQPS). LIM zinc-binding domains lie at 183–244 (DICA…TLER), 245–302 (CGKC…RKFA), and 303–372 (PVCS…RSAA). Positions 278–375 (IGDESFALGS…HVKRSAAGCC (98 aa)) are FERMT2-binding.

As to quaternary structure, interacts with FERMT2, FLNA, FLNB and FLNC. Interacts with NKX2-5.

The protein localises to the cell junction. Its subcellular location is the focal adhesion. The protein resides in the cytoplasm. It localises to the cytoskeleton. It is found in the stress fiber. Serves as an anchoring site for cell-ECM adhesion proteins and filamin-containing actin filaments. Is implicated in cell shape modulation (spreading) and motility. May participate in the regulation of filamin-mediated cross-linking and stabilization of actin filaments. May also regulate the assembly of filamin-containing signaling complexes that control actin assembly. Promotes dissociation of FLNA from ITGB3 and ITGB7. Promotes activation of integrins and regulates integrin-mediated cell-cell adhesion. The polypeptide is Filamin-binding LIM protein 1 (FBLIM1) (Pongo abelii (Sumatran orangutan)).